The primary structure comprises 248 residues: Ubiquinone/menaquinone biosynthesis C-methyltransferase UbiE (248 aa).

S-adenosyl-L-methionine contacts are provided by serine 68 and aspartate 92.

Belongs to the class I-like SAM-binding methyltransferase superfamily. MenG/UbiE family.

The catalysed reaction is a 2-demethylmenaquinol + S-adenosyl-L-methionine = a menaquinol + S-adenosyl-L-homocysteine + H(+). It carries out the reaction a 2-methoxy-6-(all-trans-polyprenyl)benzene-1,4-diol + S-adenosyl-L-methionine = a 5-methoxy-2-methyl-3-(all-trans-polyprenyl)benzene-1,4-diol + S-adenosyl-L-homocysteine + H(+). The protein operates within quinol/quinone metabolism; menaquinone biosynthesis; menaquinol from 1,4-dihydroxy-2-naphthoate: step 2/2. It functions in the pathway cofactor biosynthesis; ubiquinone biosynthesis. Methyltransferase required for the conversion of demethylmenaquinol (DMKH2) to menaquinol (MKH2) and the conversion of 2-polyprenyl-6-methoxy-1,4-benzoquinol (DDMQH2) to 2-polyprenyl-3-methyl-6-methoxy-1,4-benzoquinol (DMQH2). The protein is Ubiquinone/menaquinone biosynthesis C-methyltransferase UbiE of Rickettsia conorii (strain ATCC VR-613 / Malish 7).